A 609-amino-acid chain; its full sequence is DNA mismatch repair protein MutL (609 aa).

The interval 364 to 386 (SVNSKPTDYRPAMSPSFKSTPNT) is disordered.

This sequence belongs to the DNA mismatch repair MutL/HexB family.

In terms of biological role, this protein is involved in the repair of mismatches in DNA. It is required for dam-dependent methyl-directed DNA mismatch repair. May act as a 'molecular matchmaker', a protein that promotes the formation of a stable complex between two or more DNA-binding proteins in an ATP-dependent manner without itself being part of a final effector complex. In Rickettsia akari (strain Hartford), this protein is DNA mismatch repair protein MutL.